A 146-amino-acid chain; its full sequence is UPF0742 protein PB2B2.17c (146 aa).

A helical membrane pass occupies residues 38-60 (LTVKYCLAVKLLIYLLYCWYIYS).

This sequence belongs to the UPF0742 family.

The protein resides in the cytoplasm. It localises to the nucleus membrane. In Schizosaccharomyces pombe (strain 972 / ATCC 24843) (Fission yeast), this protein is UPF0742 protein PB2B2.17c.